We begin with the raw amino-acid sequence, 366 residues long: 5-hydroxytryptamine receptor 1F (366 aa).

Residues 1-24 lie on the Extracellular side of the membrane; that stretch reads MDFLNSSDQNLTSEELLHRMPSKI. N-linked (GlcNAc...) asparagine glycosylation is found at asparagine 5 and asparagine 10. Residues 25 to 49 traverse the membrane as a helical segment; it reads LVSLTLSGLALMTTTINSLVIAAII. At 50 to 59 the chain is on the cytoplasmic side; the sequence is VTRKLHHPAN. Residues 60–81 form a helical membrane-spanning segment; sequence YLICSLAVTDFLVAVLVMPFSI. At 82–96 the chain is on the extracellular side; that stretch reads VYIVRESWIMGQVLC. An intrachain disulfide couples cysteine 96 to cysteine 172. The chain crosses the membrane as a helical span at residues 97 to 119; it reads DIWLSVDIICCTCSILHLSAIAL. Serotonin contacts are provided by aspartate 103 and cysteine 107. The DRY motif; important for ligand-induced conformation changes signature appears at 120-122; it reads DRY. The Cytoplasmic portion of the chain corresponds to 120–139; it reads DRYRAITDAVEYARKRTPKQ. A helical transmembrane segment spans residues 140 to 159; it reads AGIMITIVWIISVFISMPPL. Topologically, residues 160–178 are extracellular; it reads FWRHQGTSRDDECIIKHDH. A helical membrane pass occupies residues 179-202; sequence IVSTIYSTFGAFYIPLVLILILYY. Residues 203–291 are Cytoplasmic-facing; the sequence is KIYKAAKTLY…KISGTRERKA (89 aa). Residues 292 to 315 traverse the membrane as a helical segment; it reads ATTLGLILGAFVICWLPFFVKELV. Residues 316–327 are Extracellular-facing; it reads VNVCEKCKISEE. Residues 328–350 traverse the membrane as a helical segment; sequence MANFLAWLGYLNSLINPLIYTIF. Positions 343 to 347 match the NPxxY motif; important for ligand-induced conformation changes and signaling motif; sequence NPLIY. The Cytoplasmic segment spans residues 351 to 366; that stretch reads NEDFKKAFQKLVRCQY.

It belongs to the G-protein coupled receptor 1 family.

The protein localises to the cell membrane. Its function is as follows. G-protein coupled receptor for 5-hydroxytryptamine (serotonin). Also functions as a receptor for various alkaloids and psychoactive substances. Ligand binding causes a conformation change that triggers signaling via guanine nucleotide-binding proteins (G proteins) and modulates the activity of downstream effectors, such as adenylate cyclase. HTR1F is coupled to G(i)/G(o) G alpha proteins and mediates inhibitory neurotransmission by inhibiting adenylate cyclase activity. In Cavia porcellus (Guinea pig), this protein is 5-hydroxytryptamine receptor 1F (HTR1F).